The following is a 429-amino-acid chain: Enolase (429 aa).

A (2R)-2-phosphoglycerate-binding site is contributed by glutamine 163. The active-site Proton donor is the glutamate 205. Mg(2+)-binding residues include aspartate 242, glutamate 287, and aspartate 314. (2R)-2-phosphoglycerate contacts are provided by lysine 339, arginine 368, serine 369, and lysine 390. The active-site Proton acceptor is the lysine 339.

The protein belongs to the enolase family. As to quaternary structure, homooctamer. Mg(2+) is required as a cofactor.

It localises to the cytoplasm. Its subcellular location is the secreted. The protein resides in the cell surface. It carries out the reaction (2R)-2-phosphoglycerate = phosphoenolpyruvate + H2O. Its pathway is carbohydrate degradation; glycolysis; pyruvate from D-glyceraldehyde 3-phosphate: step 4/5. In terms of biological role, catalyzes the reversible conversion of 2-phosphoglycerate (2-PG) into phosphoenolpyruvate (PEP). It is essential for the degradation of carbohydrates via glycolysis. This chain is Enolase, found in Zymomonas mobilis subsp. mobilis (strain ATCC 31821 / ZM4 / CP4).